The chain runs to 393 residues: Bifunctional enzyme Fae/Hps (393 aa).

The formaldehyde-activating enzyme stretch occupies residues 1–161 (MYLIGEALVG…HEKDRAAHAV (161 aa)). Residue His-17 is the Proton donor of the active site. Asp-19, Leu-48, Lys-66, Thr-68, and Gln-83 together coordinate substrate. The tract at residues 162 to 393 (MGFKVQRLWD…IDQFRIMTDF (232 aa)) is 3-hexulose-6-phosphate synthase.

It in the N-terminal section; belongs to the formaldehyde-activating enzyme family. This sequence in the C-terminal section; belongs to the HPS/KGPDC family. HPS subfamily.

The enzyme catalyses 5,6,7,8-tetrahydromethanopterin + formaldehyde = 5,10-methylenetetrahydromethanopterin + H2O. It carries out the reaction D-ribulose 5-phosphate + formaldehyde = D-arabino-hex-3-ulose 6-phosphate. It functions in the pathway carbohydrate biosynthesis; D-ribose 5-phosphate biosynthesis. Functionally, catalyzes the condensation of formaldehyde with tetrahydromethanopterin (H(4)MPT) to 5,10-methylenetetrahydromethanopterin. In terms of biological role, catalyzes the reversible formation of ribulose-5-phosphate and formaldehyde from 3-hexulose-6-phosphate. The polypeptide is Bifunctional enzyme Fae/Hps (Methanoculleus marisnigri (strain ATCC 35101 / DSM 1498 / JR1)).